An 850-amino-acid polypeptide reads, in one-letter code: Penicillin-binding protein 1A (850 aa).

Over 1–5 the chain is Cytoplasmic; it reads MKFVK. A helical; Signal-anchor for type II membrane protein transmembrane segment spans residues 6–26; the sequence is YFLILAVCCILLGAGSIYGLY. Residues 27 to 850 lie on the Periplasmic side of the membrane; it reads RYIEPQLPDV…IDNGEAQELF (824 aa). Positions 48–216 are transglycosylase; sequence MQIYSADGEL…STFNPLYSMD (169 aa). The active-site Proton donor; for transglycosylase activity is the glutamate 86. The interval 400–710 is transpeptidase; it reads DVLQTGQQIW…GWRAGRDLQR (311 aa). Serine 465 (acyl-ester intermediate; for transpeptidase activity) is an active-site residue.

This sequence in the N-terminal section; belongs to the glycosyltransferase 51 family. In the C-terminal section; belongs to the transpeptidase family.

The protein localises to the cell inner membrane. The enzyme catalyses [GlcNAc-(1-&gt;4)-Mur2Ac(oyl-L-Ala-gamma-D-Glu-L-Lys-D-Ala-D-Ala)](n)-di-trans,octa-cis-undecaprenyl diphosphate + beta-D-GlcNAc-(1-&gt;4)-Mur2Ac(oyl-L-Ala-gamma-D-Glu-L-Lys-D-Ala-D-Ala)-di-trans,octa-cis-undecaprenyl diphosphate = [GlcNAc-(1-&gt;4)-Mur2Ac(oyl-L-Ala-gamma-D-Glu-L-Lys-D-Ala-D-Ala)](n+1)-di-trans,octa-cis-undecaprenyl diphosphate + di-trans,octa-cis-undecaprenyl diphosphate + H(+). It catalyses the reaction Preferential cleavage: (Ac)2-L-Lys-D-Ala-|-D-Ala. Also transpeptidation of peptidyl-alanyl moieties that are N-acyl substituents of D-alanine.. It functions in the pathway cell wall biogenesis; peptidoglycan biosynthesis. Cell wall formation. Synthesis of cross-linked peptidoglycan from the lipid intermediates. The enzyme has a penicillin-insensitive transglycosylase N-terminal domain (formation of linear glycan strands) and a penicillin-sensitive transpeptidase C-terminal domain (cross-linking of the peptide subunits). This chain is Penicillin-binding protein 1A (mrcA), found in Escherichia coli (strain K12).